Consider the following 545-residue polypeptide: Intercellular adhesion molecule 1 (545 aa).

A signal peptide spans 1 to 27 (MASTRARPMLPLLLVLVAVVIPGPVGA). Over 28-492 (QVSIHPTEAF…HLTVLYHDQN (465 aa)) the chain is Extracellular. Ig-like C2-type domains follow at residues 41-103 (GGSV…QSSA) and 128-193 (GKNL…LDLR). The N-linked (GlcNAc...) asparagine glycan is linked to asparagine 47. 3 disulfides stabilise this stretch: cysteine 48/cysteine 92, cysteine 52/cysteine 96, and cysteine 135/cysteine 186. Asparagine 154 is a glycosylation site (N-linked (GlcNAc...) asparagine). The short motif at 177-179 (RGD) is the Cell attachment site element. Residues asparagine 183 and asparagine 202 are each glycosylated (N-linked (GlcNAc...) asparagine). In terms of domain architecture, Ig-like C2-type 3 spans 230-297 (GTQQKFLCSL…LRCVLELADQ (68 aa)). Residues cysteine 237 and cysteine 290 are joined by a disulfide bond. N-linked (GlcNAc...) asparagine glycosylation is found at asparagine 309, asparagine 344, asparagine 396, asparagine 417, asparagine 439, and asparagine 464. In terms of domain architecture, Ig-like C2-type 4 spans 325–389 (GDQVTVKCEA…FFCSAALEVD (65 aa)). A disulfide bridge connects residues cysteine 332 and cysteine 382. The interval 343-365 (LNSTSPRPPTSQGTSPRPPTSQI) is disordered. Intrachain disulfides connect cysteine 414–cysteine 430, cysteine 430–cysteine 469, and cysteine 442–cysteine 469. The region spanning 423–476 (GSQQTLTCQPQGNPAPNLTCSRKADGVPLPIGMVKSVKREMNGTYKCRAFSSRG) is the Ig-like C2-type 5 domain. The helical transmembrane segment at 493–517 (TWVIIVGVLVLIIAGFVIVASIYTY) threads the bilayer. The Cytoplasmic segment spans residues 518 to 545 (YRQRKIRIYKLQKAQEEALKLKVQAPPP).

It belongs to the immunoglobulin superfamily. ICAM family. As to quaternary structure, homodimer. Interacts with MUC1 and promotes cell aggregation in epithelial cells. Interacts with ARHGEF26/SGEF. Interacts (on T cell side) with CD81, CD247 and CD9 at immunological synapses between antigen-presenting cells and T cells. Post-translationally, monoubiquitinated, which is promoted by MARCH9 and leads to endocytosis.

Its subcellular location is the membrane. In terms of biological role, ICAM proteins are ligands for the leukocyte adhesion protein LFA-1 (integrin alpha-L/beta-2). During leukocyte trans-endothelial migration, ICAM1 engagement promotes the assembly of endothelial apical cups through ARHGEF26/SGEF and RHOG activation. In Rattus norvegicus (Rat), this protein is Intercellular adhesion molecule 1 (Icam1).